Reading from the N-terminus, the 560-residue chain is Formate--tetrahydrofolate ligase (560 aa).

69 to 76 lines the ATP pocket; it reads TPAGEGKS.

The protein belongs to the formate--tetrahydrofolate ligase family.

The enzyme catalyses (6S)-5,6,7,8-tetrahydrofolate + formate + ATP = (6R)-10-formyltetrahydrofolate + ADP + phosphate. It functions in the pathway one-carbon metabolism; tetrahydrofolate interconversion. In Bacillus pumilus (strain SAFR-032), this protein is Formate--tetrahydrofolate ligase.